Consider the following 280-residue polypeptide: Pantothenate synthetase (280 aa).

30 to 37 is an ATP binding site; sequence MGALHEGH. The Proton donor role is filled by His37. Gln61 is a binding site for (R)-pantoate. Gln61 is a binding site for beta-alanine. 147–150 serves as a coordination point for ATP; sequence GQKD. Residue Gln153 participates in (R)-pantoate binding. ATP contacts are provided by residues Val176 and 184–187; that span reads MSSR.

This sequence belongs to the pantothenate synthetase family. As to quaternary structure, homodimer.

The protein resides in the cytoplasm. It carries out the reaction (R)-pantoate + beta-alanine + ATP = (R)-pantothenate + AMP + diphosphate + H(+). The protein operates within cofactor biosynthesis; (R)-pantothenate biosynthesis; (R)-pantothenate from (R)-pantoate and beta-alanine: step 1/1. Catalyzes the condensation of pantoate with beta-alanine in an ATP-dependent reaction via a pantoyl-adenylate intermediate. In Thermodesulfovibrio yellowstonii (strain ATCC 51303 / DSM 11347 / YP87), this protein is Pantothenate synthetase.